Here is a 227-residue protein sequence, read N- to C-terminus: UPF0173 metal-dependent hydrolase Bsph_4138 (227 aa).

Belongs to the UPF0173 family.

The protein is UPF0173 metal-dependent hydrolase Bsph_4138 of Lysinibacillus sphaericus (strain C3-41).